We begin with the raw amino-acid sequence, 750 residues long: Neprilysin (750 aa).

Polar residues predominate over residues 1 to 14 (MGKSESQMDITDIN). The disordered stretch occupies residues 1 to 20 (MGKSESQMDITDINTPKPKK). Glycine 2 is lipidated: N-myristoyl glycine. At 2–28 (GKSESQMDITDINTPKPKKKQRWTPLE) the chain is on the cytoplasmic side. Serine 4 and serine 6 each carry phosphoserine. The Stop-transfer sequence motif lies at 16 to 23 (PKPKKKQR). A helical; Signal-anchor for type II membrane protein membrane pass occupies residues 29-51 (ISLSVLVLLLTIIAVTMIALYAT). Residues 52–750 (YDDGICKSSD…MNPEKKCRVW (699 aa)) are Extracellular-facing. A Peptidase M13 domain is found at 56–750 (ICKSSDCIKS…MNPEKKCRVW (695 aa)). Cystine bridges form between cysteine 57/cysteine 62, cysteine 80/cysteine 735, cysteine 88/cysteine 695, cysteine 143/cysteine 411, cysteine 234/cysteine 242, and cysteine 621/cysteine 747. Residue arginine 103 participates in a peptide binding. A glycan (N-linked (GlcNAc...) asparagine) is linked at asparagine 145. N-linked (GlcNAc...) asparagine glycans are attached at residues asparagine 285, asparagine 311, asparagine 325, and asparagine 335. Histidine 584 is a Zn(2+) binding site. Residue glutamate 585 is part of the active site. Position 588 (histidine 588) interacts with Zn(2+). N-linked (GlcNAc...) asparagine glycosylation occurs at asparagine 628. Residue glutamate 647 coordinates Zn(2+). Aspartate 651 acts as the Proton donor in catalysis.

It belongs to the peptidase M13 family. It depends on Zn(2+) as a cofactor. In terms of processing, myristoylation is a determinant of membrane targeting. Glycosylation at Asn-628 is necessary both for surface expression and neutral endopeptidase activity.

The protein resides in the cell membrane. The catalysed reaction is Preferential cleavage of polypeptides between hydrophobic residues, particularly with Phe or Tyr at P1'.. It catalyses the reaction substance P + H2O = substance P(1-9) + L-Leu-L-Met-NH2. It carries out the reaction substance P + H2O = substance P(1-7) + L-Phe-Gly-L-Leu-L-Met-NH2. The enzyme catalyses neurotensin + H2O = neurotensin(1-11) + L-isoleucyl-L-leucine. The catalysed reaction is neurotensin + H2O = neurotensin(1-10) + L-tyrosyl-L-isoleucyl-L-leucine. Its function is as follows. Thermolysin-like specificity, but is almost confined on acting on polypeptides of up to 30 amino acids. Biologically important in the destruction of opioid peptides such as Met- and Leu-enkephalins by cleavage of a Gly-Phe bond. Catalyzes cleavage of bradykinin, substance P and neurotensin peptides. Able to cleave angiotensin-1, angiotensin-2 and angiotensin 1-9. Involved in the degradation of atrial natriuretic factor (ANF) and brain natriuretic factor (BNP(1-32)). Displays UV-inducible elastase activity toward skin preelastic and elastic fibers. The sequence is that of Neprilysin (MME) from Pongo abelii (Sumatran orangutan).